The chain runs to 598 residues: UvrABC system protein C (598 aa).

In terms of domain architecture, GIY-YIG spans 13–92 (SSPGVYLMKD…IKKYQPRYNV (80 aa)). The 36-residue stretch at 206–241 (DTTIANLEEAIKKASQEHKFEHAAALYRTLTLIRQT) folds into the UVR domain.

Belongs to the UvrC family. In terms of assembly, interacts with UvrB in an incision complex.

It is found in the cytoplasm. In terms of biological role, the UvrABC repair system catalyzes the recognition and processing of DNA lesions. UvrC both incises the 5' and 3' sides of the lesion. The N-terminal half is responsible for the 3' incision and the C-terminal half is responsible for the 5' incision. The sequence is that of UvrABC system protein C from Chlamydia muridarum (strain MoPn / Nigg).